The primary structure comprises 397 residues: Elongation factor Tu 1 (397 aa).

In terms of domain architecture, tr-type G spans Lys10–Val207. The tract at residues Gly19–Thr26 is G1. Gly19–Thr26 provides a ligand contact to GTP. Mg(2+) is bound at residue Thr26. The segment at Gly60–Asn64 is G2. The segment at Asp81–Gly84 is G3. GTP-binding positions include Asp81–His85 and Asn136–Asp139. Residues Asn136 to Asp139 are G4. A G5 region spans residues Ser174–Leu176.

The protein belongs to the TRAFAC class translation factor GTPase superfamily. Classic translation factor GTPase family. EF-Tu/EF-1A subfamily. Monomer.

Its subcellular location is the cytoplasm. It catalyses the reaction GTP + H2O = GDP + phosphate + H(+). In terms of biological role, GTP hydrolase that promotes the GTP-dependent binding of aminoacyl-tRNA to the A-site of ribosomes during protein biosynthesis. The polypeptide is Elongation factor Tu 1 (Stutzerimonas stutzeri (strain A1501) (Pseudomonas stutzeri)).